The primary structure comprises 712 residues: MFVRTCRSSCNAWTNATSTTQAGSLLPPNAHRSVVLTLSLQACSARTHESLIRSFASTTSQSKRQEAEAEEKRQVSPRLGPSAPRSSYPSSAEARQKRDSDREFLISVLESSATKRDARGYLQTFGSSAALTSAGQKKPSTIGILGVPASVAGRPAFVQGTEKEISVKRNEAPHVAVVKLRAPQAWDDVLLEGVAKTLTRLRDLGLLSVIVLDCDDIKPNQASSWHETVTEQTDRLLRAIGQYGFPAAEVVDSGIWKSTENPQIPSSVPSNPLYVGFGKAFTTPLANGHILVVPPRAYSDASLQYSKADANDIVIALTTFFAGLQFGQQSSDYRQLAEKVSDGQSFRKALVDRVIVIDPLGGIPSHRQGHGTQVFINLEDEFKNIQDALYEKTQPTSAGTKDAGVSARATVHLENLRLAKSTLALLPSNASVVMTSPAEAANINVSRRNQLEAKPDGFAGEVKTRTWRNPLIHNLLTDRPIYSSSLPIGRIKPTHQDEEIALSRMPTTTLAKRGLPVTIFPDPRVNRWQPPQPGVPRLRLTDTCIDLPRLVHLINDSFGRKLNVEHYLDRVKDSLAGIIIAGEYEGGAILTWETPFGLDEETAYRKGRLVPYLDKFAVLRKSQGAGGVADIVFNAMVRDAFPDGVCWRSRKDNPVNKWYFERSRGVLKLPESNWAMFWTTPEAVSNDQMMRDYEDVCRNIAPSWADTTKPAD.

The N-terminal 47 residues, 1–47 (MFVRTCRSSCNAWTNATSTTQAGSLLPPNAHRSVVLTLSLQACSART), are a transit peptide targeting the mitochondrion. The interval 55 to 99 (FASTTSQSKRQEAEAEEKRQVSPRLGPSAPRSSYPSSAEARQKRD) is disordered. The segment covering 63-74 (KRQEAEAEEKRQ) has biased composition (basic and acidic residues). Residues 81–93 (PSAPRSSYPSSAE) are compositionally biased toward low complexity. Residues 534 to 702 (GVPRLRLTDT…YEDVCRNIAP (169 aa)) form the N-acetyltransferase domain.

The protein belongs to the acetyltransferase family.

Its subcellular location is the mitochondrion. It catalyses the reaction L-glutamate + acetyl-CoA = N-acetyl-L-glutamate + CoA + H(+). Its pathway is amino-acid biosynthesis; L-arginine biosynthesis; N(2)-acetyl-L-ornithine from L-glutamate: step 1/4. With respect to regulation, inhibited by arginine. Functionally, N-acetylglutamate synthase involved in arginine biosynthesis. The sequence is that of Amino-acid acetyltransferase, mitochondrial (arg-14) from Neurospora crassa (strain ATCC 24698 / 74-OR23-1A / CBS 708.71 / DSM 1257 / FGSC 987).